A 69-amino-acid polypeptide reads, in one-letter code: Large ribosomal subunit protein uL29 (69 aa).

The protein belongs to the universal ribosomal protein uL29 family.

The sequence is that of Large ribosomal subunit protein uL29 (rpmC) from Lactococcus lactis subsp. lactis (strain IL1403) (Streptococcus lactis).